The chain runs to 955 residues: Beta-agarase B (955 aa).

This sequence belongs to the glycosyl hydrolase 50 family.

It carries out the reaction Hydrolysis of (1-&gt;4)-beta-D-galactosidic linkages in agarose, giving the tetramer as the predominant product.. Its function is as follows. Hydrolyzes agarose to yield predominantly neoagarotetraose and neoagarohexaose. The protein is Beta-agarase B (agaB) of Vibrio sp. (strain JT0107).